The chain runs to 79 residues: Sec-independent protein translocase protein TatA (79 aa).

The helical transmembrane segment at M1–G21 threads the bilayer. Positions A46–R79 are disordered. Positions V66 to R79 are enriched in basic and acidic residues.

It belongs to the TatA/E family. The Tat system comprises two distinct complexes: a TatABC complex, containing multiple copies of TatA, TatB and TatC subunits, and a separate TatA complex, containing only TatA subunits. Substrates initially bind to the TatABC complex, which probably triggers association of the separate TatA complex to form the active translocon.

Its subcellular location is the cell inner membrane. Its function is as follows. Part of the twin-arginine translocation (Tat) system that transports large folded proteins containing a characteristic twin-arginine motif in their signal peptide across membranes. TatA could form the protein-conducting channel of the Tat system. This chain is Sec-independent protein translocase protein TatA, found in Paraburkholderia phytofirmans (strain DSM 17436 / LMG 22146 / PsJN) (Burkholderia phytofirmans).